Reading from the N-terminus, the 194-residue chain is Pyridoxine/pyridoxamine 5'-phosphate oxidase (194 aa).

Residues 42–47 (RVVLLK), 57–58 (FT), arginine 63, lysine 64, and glutamine 86 contribute to the FMN site. Residue lysine 47 participates in substrate binding. Substrate-binding residues include tyrosine 104, arginine 108, and serine 112. Residues 121–122 (QS) and tryptophan 166 contribute to the FMN site. Residue 172 to 174 (RIH) participates in substrate binding. Arginine 176 contributes to the FMN binding site.

Belongs to the pyridoxamine 5'-phosphate oxidase family. As to quaternary structure, homodimer. Requires FMN as cofactor.

It catalyses the reaction pyridoxamine 5'-phosphate + O2 + H2O = pyridoxal 5'-phosphate + H2O2 + NH4(+). The enzyme catalyses pyridoxine 5'-phosphate + O2 = pyridoxal 5'-phosphate + H2O2. Its pathway is cofactor metabolism; pyridoxal 5'-phosphate salvage; pyridoxal 5'-phosphate from pyridoxamine 5'-phosphate: step 1/1. It functions in the pathway cofactor metabolism; pyridoxal 5'-phosphate salvage; pyridoxal 5'-phosphate from pyridoxine 5'-phosphate: step 1/1. Its function is as follows. Catalyzes the oxidation of either pyridoxine 5'-phosphate (PNP) or pyridoxamine 5'-phosphate (PMP) into pyridoxal 5'-phosphate (PLP). This Ehrlichia ruminantium (strain Welgevonden) protein is Pyridoxine/pyridoxamine 5'-phosphate oxidase.